The chain runs to 457 residues: UDP-glucosyltransferase 45 (457 aa).

The Proton acceptor role is filled by H21. H21 is an an anthocyanidin binding site. D112 functions as the Charge relay in the catalytic mechanism. UDP-alpha-D-glucose contacts are provided by T134, Q336, H351, W354, N355, S356, E359, D375, and Q376.

Belongs to the UDP-glycosyltransferase family.

It carries out the reaction (20S)-protopanaxadiol + UDP-alpha-D-glucose = (20S)-ginsenoside Rh2 + UDP + H(+). Its pathway is secondary metabolite biosynthesis; terpenoid biosynthesis. Its function is as follows. Component of the triterpene saponins (e.g. PPD-type ginsenosides) biosynthetic pathway. Glycosyltransferase that catalyzes the biosynthesis of ginsenoside Rh2 from protopanaxadiol (PPD). The chain is UDP-glucosyltransferase 45 from Panax ginseng (Korean ginseng).